The chain runs to 161 residues: Stress response protein YvgO (161 aa).

The first 26 residues, 1–26 (MKRIRIPMTLALGAALTIAPLSFASA), serve as a signal peptide directing secretion.

This Bacillus subtilis (strain 168) protein is Stress response protein YvgO (yvgO).